Reading from the N-terminus, the 396-residue chain is Elongation factor Tu 2 (396 aa).

One can recognise a tr-type G domain in the interval 10-206 (KPHCNIGTIG…AVDAYIPQPE (197 aa)). A G1 region spans residues 19–26 (GHVDHGKT). 19–26 (GHVDHGKT) lines the GTP pocket. T26 is a Mg(2+) binding site. The segment at 60 to 64 (GITIS) is G2. The segment at 81-84 (DCPG) is G3. Residues 81 to 85 (DCPGH) and 136 to 139 (NKCD) each bind GTP. The segment at 136–139 (NKCD) is G4. Positions 174–176 (SAL) are G5.

The protein belongs to the TRAFAC class translation factor GTPase superfamily. Classic translation factor GTPase family. EF-Tu/EF-1A subfamily. In terms of assembly, monomer.

Its subcellular location is the cytoplasm. It carries out the reaction GTP + H2O = GDP + phosphate + H(+). Functionally, GTP hydrolase that promotes the GTP-dependent binding of aminoacyl-tRNA to the A-site of ribosomes during protein biosynthesis. This chain is Elongation factor Tu 2, found in Rhodopseudomonas palustris (strain BisB5).